A 361-amino-acid polypeptide reads, in one-letter code: dTDP-glucose 4,6-dehydratase 1 (361 aa).

Residues 11–12 (FI), 32–35 (DKLT), 58–59 (DI), 80–84 (LAAES), and Thr99 contribute to the NAD(+) site. Residue Ser84 coordinates substrate. Thr133 serves as a coordination point for substrate. Asp134 functions as the Proton donor in the catalytic mechanism. Catalysis depends on proton acceptor residues Glu135 and Tyr167. Residue 167 to 171 (YSASK) coordinates NAD(+). A substrate-binding site is contributed by Asn196. Residue Asn197 coordinates NAD(+). Residues 206–207 (KL), 222–224 (PIY), Arg231, Asn266, and 296–300 (DRPGH) contribute to the substrate site.

This sequence belongs to the NAD(P)-dependent epimerase/dehydratase family. dTDP-glucose dehydratase subfamily. As to quaternary structure, homodimer. NAD(+) serves as cofactor.

The enzyme catalyses dTDP-alpha-D-glucose = dTDP-4-dehydro-6-deoxy-alpha-D-glucose + H2O. Its pathway is carbohydrate biosynthesis; dTDP-L-rhamnose biosynthesis. The protein operates within bacterial outer membrane biogenesis; LPS O-antigen biosynthesis. Its function is as follows. Catalyzes the dehydration of dTDP-D-glucose to form dTDP-6-deoxy-D-xylo-4-hexulose via a three-step process involving oxidation, dehydration and reduction. The protein is dTDP-glucose 4,6-dehydratase 1 (rfbB) of Escherichia coli (strain K12).